The following is a 165-amino-acid chain: Transcription factor zip-10 (165 aa).

Low complexity predominate over residues 53-71; that stretch reads ASLGTSTTSSSRCSSTESS. The interval 53 to 99 is disordered; it reads ASLGTSTTSSSRCSSTESSAAPGKIRRGRPQQEIADGQDAHSQKKRH. Residues 104-150 adopt a coiled-coil conformation; the sequence is ARQYRAQMRQKVENVKSLHDEKEQLELEVKALRQAVSGLQQENAQKD.

Its subcellular location is the nucleus. In terms of biological role, transcription factor that regulates the expression of genes in response to changes in temperature. In particular, binds to the promoter region of genes such as asp-17 in response to severe cold to warm temperature transitions to promote gene expression. Promotes stress-induced death, particularly in older animals, following cold shock followed by warming and this may have evolved as a form of kin survival under thermal stress conditions, favoring the survival of younger animals. This Caenorhabditis elegans protein is Transcription factor zip-10.